A 352-amino-acid chain; its full sequence is Protein Wnt-3a (352 aa).

Positions 1-18 are cleaved as a signal peptide; it reads MGCFGYLLLIIGLHQVLA. Intrachain disulfides connect Cys-77–Cys-88, Cys-128–Cys-136, Cys-138–Cys-155, Cys-203–Cys-217, Cys-205–Cys-212, Cys-297–Cys-312, Cys-327–Cys-342, Cys-329–Cys-339, and Cys-334–Cys-335. N-linked (GlcNAc...) asparagine glycosylation occurs at Asn-87. Ser-209 is lipidated: O-palmitoleoyl serine. Asn-298 carries an N-linked (GlcNAc...) asparagine glycan.

The protein belongs to the Wnt family. In terms of processing, disulfide bonds have critical and distinct roles in secretion and activity. Loss of each conserved cysteine results in high molecular weight oxidized Wnt oligomers, which are formed through inter-Wnt disulfide bonding. Palmitoleoylation is required for efficient binding to frizzled receptors. Depalmitoleoylation leads to Wnt signaling pathway inhibition. In terms of tissue distribution, at neurula in anterior neural fold; at tailbud in dorsal midline of midbrain.

It is found in the secreted. The protein resides in the extracellular space. It localises to the extracellular matrix. Its function is as follows. Ligand for members of the frizzled family of seven transmembrane receptors. Functions in the canonical Wnt signaling pathway that results in activation of transcription factors of the TCF/LEF family. Required for normal embryonic mesoderm development and formation of caudal somites. Required for normal morphogenesis of the developing neural tube. The chain is Protein Wnt-3a (wnt3a) from Xenopus laevis (African clawed frog).